The sequence spans 174 residues: Probable carboxylesterase Culp5 (174 aa).

The active-site Nucleophile is Ser67. Cys137 and Cys144 are oxidised to a cystine. The active site involves Asp141. Residue His153 is the Proton donor/acceptor of the active site.

It belongs to the cutinase family.

Does not exhibit cutinase activity. The protein is Probable carboxylesterase Culp5 of Mycobacterium tuberculosis (strain ATCC 25618 / H37Rv).